Reading from the N-terminus, the 438-residue chain is MALRGVYAQLLNRGPGLRVFRSWSSATAQTEKGEKTQSRSAKPSRPEFDWRDPLLLEEQLTADEILIRDTFRTYCQERLMPRILLANRNEVFHREIISEMGELGMLGPTIQGYSCAGVSSVAYGLLARELERVDSGYRSAMSVQSSLVMYPIYAYGSEEQKQKYLPRLAKGELLGCFGLTEPNHGSDPSGMETRARHNPSSRSYILSGSKTWITNSPVADLLIVWARCEDSCIRGFLLEKGMRGLSTPRIEGKFSLRASSTGMIIMDDVEVPEENVLPGVSGLAGPFGCLNNARYGITWGVLGAAEFCLHTARQYTLDRIQFGVPLAKNQLIQKKLADMLTEITLGLHACLQLGRLKDQDKAAPEMVSLLKRNNCGKALDIARQARDMLGGNGISDEYHVIRHVMNLESVNTYEGTHDIHALILGRAITGIQAFVAGK.

The transit peptide at 1–44 (MALRGVYAQLLNRGPGLRVFRSWSSATAQTEKGEKTQSRSAKPS) directs the protein to the mitochondrion. Substrate is bound by residues 138-139 (RS) and serine 186. FAD is bound by residues 177–186 (FGLTEPNHGS), serine 186, and 212–214 (WIT). At lysine 240 the chain carries N6-acetyllysine. 287-294 (FGCLNNAR) is a binding site for substrate. Residues arginine 319, glutamine 330, and 387–391 (DMLGG) contribute to the FAD site. Catalysis depends on glutamate 414, which acts as the Proton acceptor. Glycine 415 contributes to the substrate binding site. FAD is bound by residues threonine 416, 416–418 (THD), and phenylalanine 434.

It belongs to the acyl-CoA dehydrogenase family. Homotetramer. Requires FAD as cofactor.

The protein localises to the mitochondrion matrix. It catalyses the reaction glutaryl-CoA + oxidized [electron-transfer flavoprotein] + 2 H(+) = (2E)-butenoyl-CoA + reduced [electron-transfer flavoprotein] + CO2. It functions in the pathway amino-acid metabolism; lysine degradation. Its pathway is amino-acid metabolism; tryptophan metabolism. In terms of biological role, catalyzes the oxidative decarboxylation of glutaryl-CoA to crotonyl-CoA and CO(2) in the degradative pathway of L-lysine, L-hydroxylysine, and L-tryptophan metabolism. It uses electron transfer flavoprotein as its electron acceptor. This Bos taurus (Bovine) protein is Glutaryl-CoA dehydrogenase, mitochondrial (GCDH).